Consider the following 474-residue polypeptide: Cysteine--tRNA ligase (474 aa).

Cys27 provides a ligand contact to Zn(2+). Residues 29-39 (ITPYDHMHVGH) carry the 'HIGH' region motif. Zn(2+) contacts are provided by Cys213, His238, and Glu242. A 'KMSKS' region motif is present at residues 271–275 (KMSKS). Residue Lys274 participates in ATP binding.

This sequence belongs to the class-I aminoacyl-tRNA synthetase family. It depends on Zn(2+) as a cofactor.

The protein resides in the cytoplasm. It catalyses the reaction tRNA(Cys) + L-cysteine + ATP = L-cysteinyl-tRNA(Cys) + AMP + diphosphate. The sequence is that of Cysteine--tRNA ligase from Pyrobaculum neutrophilum (strain DSM 2338 / JCM 9278 / NBRC 100436 / V24Sta) (Thermoproteus neutrophilus).